Here is a 232-residue protein sequence, read N- to C-terminus: Lipoprotein-releasing system ATP-binding protein LolD (232 aa).

An ABC transporter domain is found at valine 11–leucine 231. Position 47 to 54 (alanine 47 to serine 54) interacts with ATP.

This sequence belongs to the ABC transporter superfamily. Lipoprotein translocase (TC 3.A.1.125) family. In terms of assembly, the complex is composed of two ATP-binding proteins (LolD) and two transmembrane proteins (LolC and LolE).

The protein localises to the cell inner membrane. In terms of biological role, part of the ABC transporter complex LolCDE involved in the translocation of mature outer membrane-directed lipoproteins, from the inner membrane to the periplasmic chaperone, LolA. Responsible for the formation of the LolA-lipoprotein complex in an ATP-dependent manner. This Nitrobacter hamburgensis (strain DSM 10229 / NCIMB 13809 / X14) protein is Lipoprotein-releasing system ATP-binding protein LolD.